The following is a 432-amino-acid chain: Protein distal antenna-related (432 aa).

Positions 15–66 (TRGKRPLRNLTPNDKVRAIQRIHNGETKASVSRDLGVPESTLRGWCKNEQKL) constitute an HTH psq-type domain. Positions 42 to 62 (KASVSRDLGVPESTLRGWCKN) form a DNA-binding region, H-T-H motif. Disordered stretches follow at residues 195-221 (ESAD…NSTK) and 401-432 (SCAS…DGEQ). 2 stretches are compositionally biased toward polar residues: residues 202 to 211 (KSPQSTTDIT) and 401 to 425 (SCAS…TSIA).

In terms of assembly, interacts with itself, dan, ey and dac to form a complex (or complexes) containing the RD factors.

It localises to the nucleus. Probable transcription factor with a role in the retinal determination (RD) network. Regulates ato expression and is required for normal R8 induction and differentiation. Danr appears to repress Dan expression, but Dan is required for Danr expression anterior to the morphogenetic furrow (MF). Dan and Danr lie downstream of so and require dac function for highest levels of expression. Contributes to differentiation of antenna-specific characteristics; effector gene that acts downstream of homothorax (hth), Distal-less (Dll), cut (ct) and spineless (ss) genes to control differentiation of distal antennal structures. The chain is Protein distal antenna-related from Drosophila pseudoobscura pseudoobscura (Fruit fly).